We begin with the raw amino-acid sequence, 904 residues long: Phosphoenolpyruvate carboxylase (904 aa).

Residues H151 and K570 contribute to the active site.

Belongs to the PEPCase type 1 family. The cofactor is Mg(2+).

The enzyme catalyses oxaloacetate + phosphate = phosphoenolpyruvate + hydrogencarbonate. In terms of biological role, forms oxaloacetate, a four-carbon dicarboxylic acid source for the tricarboxylic acid cycle. This is Phosphoenolpyruvate carboxylase from Xanthomonas campestris pv. campestris (strain 8004).